The chain runs to 483 residues: MTKMDIRGAVDAAVPTNIIAAKAAEVRANKVNWQSYLQGQMISAEDCEFIQRFEMKRSSEDKQEMLQTEGSQCAKTFINLMTHISKEQTVQYILTMVDDMLQENHQRVSIFFDYAKRSKSTAWPYFLPMLNRQDPFTVHMAARIIAKLAAWGKELMEGSDLNYYFNWIKTQLSSQKLRGSGVAVETGTISSSDSSQYVQCVAGCLQLMLRVNEYRFAWVEADGVNCIMGVLSNKCGFQLQYQMIFSIWLLAFSPQMCEHLRRYNIIPVLSDILQESVKEKVTRIILAAFRNFLEKSTERETRQEYALAMIQCKVLKQLENLEQQKYDDEDISEDIKFLLEKLGESVQDLSSFDEYSSELKSGRLEWSPVHKSEKFWRENAVRLNEKNYELLKILTKLLEVSDDPQVLAVAAHDVGEYVRHYPRGKRVIEQLGGKQLVMNHMHHEDQQVRYNALLAVQKLMVHNWEYLGKQLQSEQPQTAAARS.

Residues S59 and S483 each carry the phosphoserine modification.

This sequence belongs to the V-ATPase H subunit family. As to quaternary structure, V-ATPase is a heteromultimeric enzyme made up of two complexes: the ATP-hydrolytic V1 complex and the proton translocation V0 complex. The V1 complex consists of three catalytic AB heterodimers that form a heterohexamer, three peripheral stalks each consisting of EG heterodimers, one central rotor including subunits D and F, and the regulatory subunits C and H. The proton translocation complex V0 consists of the proton transport subunit a, a ring of proteolipid subunits c9c'', rotary subunit d, subunits e and f, and the accessory subunits ATP6AP1/Ac45 and ATP6AP2/PRR. Interacts with AP2M1.

It localises to the cytoplasmic vesicle. It is found in the clathrin-coated vesicle membrane. In terms of biological role, subunit of the V1 complex of vacuolar(H+)-ATPase (V-ATPase), a multisubunit enzyme composed of a peripheral complex (V1) that hydrolyzes ATP and a membrane integral complex (V0) that translocates protons. V-ATPase is responsible for acidifying and maintaining the pH of intracellular compartments and in some cell types, is targeted to the plasma membrane, where it is responsible for acidifying the extracellular environment. Subunit H is essential for V-ATPase activity, but not for the assembly of the complex. Involved in the endocytosis mediated by clathrin-coated pits, required for the formation of endosomes. The chain is V-type proton ATPase subunit H (Atp6v1h) from Mus musculus (Mouse).